The primary structure comprises 467 residues: Congo red hypersensitive protein 2 (467 aa).

The first 23 residues, 1–23, serve as a signal peptide directing secretion; sequence MAIVNSWLICLVSIFSFVVRVEA. Asn-28 carries an N-linked (GlcNAc...) asparagine glycan. A disulfide bond links Cys-56 and Cys-67. The region spanning 63–280 is the GH16 domain; sequence SHDSCMPVPI…WSGGEINWDA (218 aa). Asn-96 carries an N-linked (GlcNAc...) asparagine glycan. Glu-166 (nucleophile) is an active-site residue. The active-site Proton donor is Glu-170. Glu-170 is a binding site for chitin. Asn-190, Asn-196, Asn-233, and Asn-237 each carry an N-linked (GlcNAc...) asparagine glycan. Position 257 (Trp-257) interacts with chitin. N-linked (GlcNAc...) asparagine glycosylation occurs at Asn-261. Position 268 (Thr-268) interacts with chitin. Residues Asn-297 and Asn-310 are each glycosylated (N-linked (GlcNAc...) asparagine). A disordered region spans residues 337 to 444; sequence MDSDEGSGLD…SSSTSSMSGN (108 aa). The span at 351–444 shows a compositional bias: low complexity; it reads ATTSSTQKSS…SSSTSSMSGN (94 aa). A lipid anchor (GPI-anchor amidated asparagine) is attached at Asn-445. The propeptide at 446-467 is removed in mature form; that stretch reads AGANVAANWRLTVLCVILGYVL.

It belongs to the glycosyl hydrolase 16 family. CRH1 subfamily. The GPI-anchor is attached to the protein in the endoplasmic reticulum and serves to target the protein to the cell surface. There, the glucosamine-inositol phospholipid moiety is cleaved off and the GPI-modified mannoprotein is covalently attached via its lipidless GPI glycan remnant to the 1,6-beta-glucan of the outer cell wall layer.

It is found in the secreted. The protein resides in the cell wall. Its subcellular location is the membrane. It catalyses the reaction Random endo-hydrolysis of N-acetyl-beta-D-glucosaminide (1-&gt;4)-beta-linkages in chitin and chitodextrins.. In terms of biological role, dual chitinase/transglycosylase that plays a role in cell wall architecture. Chitinase and transglycosylase activities are coupled. Required for the polysaccharide cross-linking at the septa and the cell wall. More specifically, transfers chitin to both beta(1-3)- and beta(1-6)glucan in the cell wall. The minimal number of intact hexopyranose units required in the molecule of the acceptor oligosaccharide is two and the effectivity of the acceptor increased with the increasing length of its oligosaccharide chain. This Saccharomyces cerevisiae (strain ATCC 204508 / S288c) (Baker's yeast) protein is Congo red hypersensitive protein 2.